We begin with the raw amino-acid sequence, 744 residues long: NAD(P)H-quinone oxidoreductase subunit 5, chloroplastic (744 aa).

16 consecutive transmembrane segments (helical) span residues 9 to 29, 40 to 60, 89 to 109, 125 to 145, 147 to 167, 185 to 205, 219 to 239, 258 to 278, 290 to 312, 327 to 347, 354 to 374, 396 to 416, 425 to 445, 549 to 569, 608 to 628, and 724 to 744; these read WIIP…LLLF, WAFQ…NLSI, IDPL…MVLI, FAYM…SNLI, IYIF…FWFT, GDFG…SFEF, NEVN…GAIA, TPIS…FLVA, IMNF…ALAQ, LGYM…FHLI, ALLF…VGYC, TSFL…CFWS, WLYS…TAFY, LFPI…GIPF, VFSV…YKPV, and YLFF…FLNF.

This sequence belongs to the complex I subunit 5 family. In terms of assembly, NDH is composed of at least 16 different subunits, 5 of which are encoded in the nucleus.

The protein resides in the plastid. The protein localises to the chloroplast thylakoid membrane. It carries out the reaction a plastoquinone + NADH + (n+1) H(+)(in) = a plastoquinol + NAD(+) + n H(+)(out). The catalysed reaction is a plastoquinone + NADPH + (n+1) H(+)(in) = a plastoquinol + NADP(+) + n H(+)(out). Its function is as follows. NDH shuttles electrons from NAD(P)H:plastoquinone, via FMN and iron-sulfur (Fe-S) centers, to quinones in the photosynthetic chain and possibly in a chloroplast respiratory chain. The immediate electron acceptor for the enzyme in this species is believed to be plastoquinone. Couples the redox reaction to proton translocation, and thus conserves the redox energy in a proton gradient. In Adenocaulon himalaicum (Trailplant), this protein is NAD(P)H-quinone oxidoreductase subunit 5, chloroplastic (ndhF).